The following is an 85-amino-acid chain: Large ribosomal subunit protein bL27 (85 aa).

Residues 1-21 are disordered; sequence MAHKKGLGSTKNGRDSQAKRL.

Belongs to the bacterial ribosomal protein bL27 family.

In Thermus thermophilus (strain ATCC BAA-163 / DSM 7039 / HB27), this protein is Large ribosomal subunit protein bL27.